The primary structure comprises 296 residues: 4-diphosphocytidyl-2-C-methyl-D-erythritol kinase (296 aa).

The active site involves Lys19. Residue 102-112 (PMGAGLGGGSS) coordinates ATP. Asp144 is a catalytic residue.

This sequence belongs to the GHMP kinase family. IspE subfamily.

The enzyme catalyses 4-CDP-2-C-methyl-D-erythritol + ATP = 4-CDP-2-C-methyl-D-erythritol 2-phosphate + ADP + H(+). Its pathway is isoprenoid biosynthesis; isopentenyl diphosphate biosynthesis via DXP pathway; isopentenyl diphosphate from 1-deoxy-D-xylulose 5-phosphate: step 3/6. Functionally, catalyzes the phosphorylation of the position 2 hydroxy group of 4-diphosphocytidyl-2C-methyl-D-erythritol. The protein is 4-diphosphocytidyl-2-C-methyl-D-erythritol kinase of Burkholderia pseudomallei (strain 1710b).